Here is a 421-residue protein sequence, read N- to C-terminus: DNA (cytosine-5)-methyltransferase 3-like (421 aa).

Residues 1 to 14 (MGSRETPSSCSKTL) are compositionally biased toward polar residues. Residues 1 to 39 (MGSRETPSSCSKTLETLDLETSDSSSPDADSPLEEQWLK) form a disordered region. Positions 75-207 (EVKVNRRSIE…LKAFHDQEGA (133 aa)) constitute an ADD domain. The segment at 86 to 116 (ICLCCGTLQVYTRHPLFEGGLCAPCKDKFLE) adopts a GATA-type; atypical zinc-finger fold. Residues 127 to 183 (QSYCTICCSGGTLFICESPDCTRCYCFECVDILVGPGTSERINAMACWVCFLCLPFS) form a PHD-type; atypical zinc finger.

In terms of assembly, homodimer. Heterotetramer composed of 1 DNMT3A homodimer and 2 DNMT3L subunits (DNMT3L-DNMT3A-DNMT3A-DNMT3L). Interacts with histone H3 (via N-terminus); interaction is strongly inhibited by methylation at lysine 4 (H3K4me). Interacts with EZH2; the interaction is direct. Interacts with SPOCD1. Expressed in testis, thymus, ovary, and heart.

Its subcellular location is the nucleus. Its function is as follows. Catalytically inactive regulatory factor of DNA methyltransferases that can either promote or inhibit DNA methylation depending on the context. Essential for the function of DNMT3A and DNMT3B: activates DNMT3A and DNMT3B by binding to their catalytic domain. Acts by accelerating the binding of DNA and S-adenosyl-L-methionine (AdoMet) to the methyltransferases and dissociates from the complex after DNA binding to the methyltransferases. Recognizes unmethylated histone H3 lysine 4 (H3K4me0) and induces de novo DNA methylation by recruitment or activation of DNMT3. Plays a key role in embryonic stem cells and germ cells. In germ cells, required for the methylation of imprinted loci together with DNMT3A. In male germ cells, specifically required to methylate retrotransposons, preventing their mobilization. Plays a key role in embryonic stem cells (ESCs) by acting both as an positive and negative regulator of DNA methylation. While it promotes DNA methylation of housekeeping genes together with DNMT3A and DNMT3B, it also acts as an inhibitor of DNA methylation at the promoter of bivalent genes. Interacts with the EZH2 component of the PRC2/EED-EZH2 complex, preventing interaction of DNMT3A and DNMT3B with the PRC2/EED-EZH2 complex, leading to maintain low methylation levels at the promoters of bivalent genes. Promotes differentiation of ESCs into primordial germ cells by inhibiting DNA methylation at the promoter of RHOX5, thereby activating its expression. The protein is DNA (cytosine-5)-methyltransferase 3-like (Dnmt3l) of Mus musculus (Mouse).